A 231-amino-acid polypeptide reads, in one-letter code: NADH-ubiquinone oxidoreductase chain 4 (231 aa).

6 consecutive transmembrane segments (helical) span residues 1 to 21, 34 to 54, 63 to 85, 89 to 111, 124 to 146, and 169 to 189; these read PIAGSMVLAAILLKLGGYGII, LFLPFIVLALWGAILANLTCL, IAYSSISHMGLVVAAIIIQTPWG, AMALMIAHGFTSSALFCLANMTY, GLHNTLPMATTWWLMTNLMNIAI, and TIIILGLSMLITASYSLHMFL.

Belongs to the complex I subunit 4 family.

It is found in the mitochondrion membrane. The catalysed reaction is a ubiquinone + NADH + 5 H(+)(in) = a ubiquinol + NAD(+) + 4 H(+)(out). In terms of biological role, core subunit of the mitochondrial membrane respiratory chain NADH dehydrogenase (Complex I) that is believed to belong to the minimal assembly required for catalysis. Complex I functions in the transfer of electrons from NADH to the respiratory chain. The immediate electron acceptor for the enzyme is believed to be ubiquinone. The chain is NADH-ubiquinone oxidoreductase chain 4 (MT-ND4) from Crotalus lepidus (Banded rock rattlesnake).